A 548-amino-acid chain; its full sequence is Thermostable neutral protease NprT (548 aa).

The N-terminal stretch at 1-25 (MNKRAMLGAIGLAFGLLAAPIGASA) is a signal peptide. Positions 26 to 229 (KGESIVWNEQ…DSRQPGGGQP (204 aa)) are cleaved as a propeptide — activation peptide. 4 residues coordinate Ca(2+): D289, D291, Q293, and D370. H374 contacts Zn(2+). E375 is a catalytic residue. Zn(2+)-binding residues include H378 and E398. Residues E409, N415, D417, E419, E422, Y425, T426, V429, and D432 each coordinate Ca(2+). H463 (proton donor) is an active-site residue.

The protein belongs to the peptidase M4 family. Ca(2+) serves as cofactor. Requires Zn(2+) as cofactor.

It is found in the secreted. Its casein hydrolytic activity is inhibited almost completely by a chelating agent (EDTA), whereas neither diisopropyl fluorophosphate nor phenylmethylsulfonyl fluoride inhibit the proteolytic activity in vitro. Its function is as follows. Extracellular zinc metalloprotease. The protein is Thermostable neutral protease NprT (nprT) of Geobacillus stearothermophilus (Bacillus stearothermophilus).